The following is a 219-amino-acid chain: MKQSVIIVAGGKGLRMGSDLPKQFLPVGGKPVLMHTLEAFRKYDAMLQIILVLPREQQDFWKQLCEEHHFSVEHLVADGGETRFHSVKNGLALVQAPGLVGVHDGVRPFVTLEVIRRCYELAEQHKAVIPVVDVVETLRHLTDAGSETVSRTEYKLVQTPQVFEVELLKQAYGQEFTPFFTDDASVVEAMGVPVHLAEGNRENIKITTPFDLKIGSALL.

Belongs to the IspD/TarI cytidylyltransferase family. IspD subfamily.

The enzyme catalyses 2-C-methyl-D-erythritol 4-phosphate + CTP + H(+) = 4-CDP-2-C-methyl-D-erythritol + diphosphate. It functions in the pathway isoprenoid biosynthesis; isopentenyl diphosphate biosynthesis via DXP pathway; isopentenyl diphosphate from 1-deoxy-D-xylulose 5-phosphate: step 2/6. In terms of biological role, catalyzes the formation of 4-diphosphocytidyl-2-C-methyl-D-erythritol from CTP and 2-C-methyl-D-erythritol 4-phosphate (MEP). This chain is 2-C-methyl-D-erythritol 4-phosphate cytidylyltransferase, found in Bacteroides thetaiotaomicron (strain ATCC 29148 / DSM 2079 / JCM 5827 / CCUG 10774 / NCTC 10582 / VPI-5482 / E50).